The primary structure comprises 134 residues: MRHYEVVLIVHPDQSDQVVGMVERYIKLVQDNNGMVHRLEDWGRRQLAYPINKIHKAHYVLFNIECDGATLEELEELFRYNDAIIRSLVVRRDDAITEPSQLAKSADEKRARKAPRSENFDNDQDDESNDDSDE.

The interval 99 to 134 (PSQLAKSADEKRARKAPRSENFDNDQDDESNDDSDE) is disordered. Residues 105-119 (SADEKRARKAPRSEN) show a composition bias toward basic and acidic residues. Over residues 120–134 (FDNDQDDESNDDSDE) the composition is skewed to acidic residues.

Belongs to the bacterial ribosomal protein bS6 family.

Its function is as follows. Binds together with bS18 to 16S ribosomal RNA. The protein is Small ribosomal subunit protein bS6 of Psychrobacter sp. (strain PRwf-1).